Consider the following 147-residue polypeptide: Myoglobin (147 aa).

In terms of domain architecture, Globin spans 2–141; that stretch reads ADHDLVLKCW…VIGDIDGYYK (140 aa). His-60 serves as a coordination point for nitrite. Residue His-60 participates in O2 binding. Residue His-89 participates in heme b binding.

This sequence belongs to the globin family. As to quaternary structure, monomeric.

It is found in the cytoplasm. The protein localises to the sarcoplasm. The enzyme catalyses Fe(III)-heme b-[protein] + nitric oxide + H2O = Fe(II)-heme b-[protein] + nitrite + 2 H(+). The catalysed reaction is H2O2 + AH2 = A + 2 H2O. Monomeric heme protein which primary function is to store oxygen and facilitate its diffusion within muscle tissues. Reversibly binds oxygen through a pentacoordinated heme iron and enables its timely and efficient release as needed during periods of heightened demand. Depending on the oxidative conditions of tissues and cells, and in addition to its ability to bind oxygen, it also has a nitrite reductase activity whereby it regulates the production of bioactive nitric oxide. Under stress conditions, like hypoxia and anoxia, it also protects cells against reactive oxygen species thanks to its pseudoperoxidase activity. This Danio rerio (Zebrafish) protein is Myoglobin (mb).